The chain runs to 531 residues: Flavin-containing monooxygenase 3 (531 aa).

FAD-binding positions include 9–13 (GAGIS), Glu32, 40–41 (LW), and 61–62 (NS). NADP(+) contacts are provided by residues 60–61 (TN) and 195–198 (SGCD). A helical transmembrane segment spans residues 511–531 (FSPWLKLLAIAVLLIAAVLVF).

The protein belongs to the FMO family. The cofactor is FAD. Liver.

It localises to the microsome membrane. The protein localises to the endoplasmic reticulum membrane. It carries out the reaction trimethylamine + NADPH + O2 = trimethylamine N-oxide + NADP(+) + H2O. The enzyme catalyses N,N-dimethylaniline + NADPH + O2 + H(+) = N,N-dimethylaniline N-oxide + NADP(+) + H2O. The catalysed reaction is hypotaurine + NADPH + O2 + H(+) = taurine + NADP(+) + H2O. It catalyses the reaction (S)-nicotine + NADPH + O2 = trans-(S)-nicotine N(1')-oxide + NADP(+) + H2O. It carries out the reaction albendazole + NADPH + O2 + H(+) = albendazole S-oxide + NADP(+) + H2O. Functionally, essential hepatic enzyme that catalyzes the oxygenation of a wide variety of nitrogen- and sulfur-containing compounds including drugs as well as dietary compounds. Plays an important role in the metabolism of trimethylamine (TMA), via the production of trimethylamine N-oxide (TMAO) metabolite. TMA is generated by the action of gut microbiota using dietary precursors such as choline, choline containing compounds, betaine or L-carnitine. By regulating TMAO concentration, FMO3 directly impacts both platelet responsiveness and rate of thrombus formation. The sequence is that of Flavin-containing monooxygenase 3 (FMO3) from Oryctolagus cuniculus (Rabbit).